The chain runs to 289 residues: Probable porphobilinogen deaminase (289 aa).

Cys234 is modified (S-(dipyrrolylmethanemethyl)cysteine).

The protein belongs to the HMBS family. Dipyrromethane is required as a cofactor.

The catalysed reaction is 4 porphobilinogen + H2O = hydroxymethylbilane + 4 NH4(+). It functions in the pathway porphyrin-containing compound metabolism; protoporphyrin-IX biosynthesis; coproporphyrinogen-III from 5-aminolevulinate: step 2/4. Tetrapolymerization of the monopyrrole PBG into the hydroxymethylbilane pre-uroporphyrinogen in several discrete steps. This is Probable porphobilinogen deaminase (hemC) from Archaeoglobus fulgidus (strain ATCC 49558 / DSM 4304 / JCM 9628 / NBRC 100126 / VC-16).